We begin with the raw amino-acid sequence, 276 residues long: Tryptase beta-2 (276 aa).

Residues methionine 1 to serine 21 form the signal peptide. Positions alanine 22–glycine 31 are cleaved as a propeptide — activation peptide. Positions isoleucine 32–proline 273 constitute a Peptidase S1 domain. A disulfide bridge connects residues cysteine 60 and cysteine 76. The active-site Charge relay system is the histidine 75. Phosphotyrosine is present on tyrosine 98. Residue aspartate 122 is the Charge relay system of the active site. The N-linked (GlcNAc...) asparagine glycan is linked to asparagine 133. Disulfide bonds link cysteine 156–cysteine 231, cysteine 189–cysteine 212, and cysteine 221–cysteine 249. The Charge relay system role is filled by serine 225.

This sequence belongs to the peptidase S1 family. Tryptase subfamily. In terms of assembly, homotetramer. The active tetramer is converted to inactive monomers at neutral and acidic pH in the absence of heparin. Low concentrations of inactive monomers become active monomers at pH 6.0 in the presence of heparin. When the concentration of active monomers is higher, they convert to active monomers and then to active tetramers. These monomers are active and functionally distinct from the tetrameric enzyme. In contrast to the hidden active sites in the tetrameric form, the active site of the monomeric form is accessible for macromolecular proteins and inhibitors, e.g. fibrinogen which is a substrate for the monomeric but not for the tetrameric form. The monomeric form forms a complex with SERPINB6. In terms of tissue distribution, during embryogenesis, detected primarily in skin.

The protein localises to the secreted. It catalyses the reaction Preferential cleavage: Arg-|-Xaa, Lys-|-Xaa, but with more restricted specificity than trypsin.. In terms of biological role, tryptase is the major neutral protease present in mast cells and is secreted upon the coupled activation-degranulation response of this cell type. Plays a role in innate immunity. The polypeptide is Tryptase beta-2 (Tpsb2) (Mus musculus (Mouse)).